Reading from the N-terminus, the 485-residue chain is Mitochondria-eating protein (485 aa).

Positions 112–210 form a coiled coil; it reads TSHERELNEV…SILSSESSIL (99 aa). Low complexity-rich tracts occupy residues 214–241 and 471–485; these read LSRS…SPTS and RSRS…TPRF. 2 disordered regions span residues 214-244 and 451-485; these read LSRS…SAKL and RSRS…TPRF.

Belongs to the MIEAP family.

The protein resides in the cytoplasm. It localises to the mitochondrion outer membrane. The protein localises to the mitochondrion matrix. Its function is as follows. Key regulator of mitochondrial quality that mediates the repairing or degradation of unhealthy mitochondria in response to mitochondrial damage. Mediator of mitochondrial protein catabolic process (also named MALM) by mediating the degradation of damaged proteins inside mitochondria by promoting the accumulation in the mitochondrial matrix of hydrolases that are characteristic of the lysosomal lumen. Also involved in mitochondrion degradation of damaged mitochondria by promoting the formation of vacuole-like structures (named MIV), which engulf and degrade unhealthy mitochondria by accumulating lysosomes. Binds cardiolipin. May form molecular condensates (non-membrane-bounded organelles) within mitochondria that compartmentalize and promote cardiolipin metabolism. The sequence is that of Mitochondria-eating protein (spata18) from Xenopus laevis (African clawed frog).